The primary structure comprises 451 residues: uncharacterized protein (451 aa).

5 residues coordinate Mn(2+): Asp305, Asp316, His384, Glu414, and Glu428.

The protein belongs to the peptidase M24B family. Mn(2+) is required as a cofactor.

This is an uncharacterized protein from Schizosaccharomyces pombe (strain 972 / ATCC 24843) (Fission yeast).